Consider the following 123-residue polypeptide: Small ribosomal subunit protein uS12 (123 aa).

D89 carries the 3-methylthioaspartic acid modification.

Belongs to the universal ribosomal protein uS12 family. Part of the 30S ribosomal subunit. Contacts proteins S8 and S17. May interact with IF1 in the 30S initiation complex.

Functionally, with S4 and S5 plays an important role in translational accuracy. In terms of biological role, interacts with and stabilizes bases of the 16S rRNA that are involved in tRNA selection in the A site and with the mRNA backbone. Located at the interface of the 30S and 50S subunits, it traverses the body of the 30S subunit contacting proteins on the other side and probably holding the rRNA structure together. The combined cluster of proteins S8, S12 and S17 appears to hold together the shoulder and platform of the 30S subunit. The polypeptide is Small ribosomal subunit protein uS12 (Bartonella tribocorum (strain CIP 105476 / IBS 506)).